The chain runs to 115 residues: Large ribosomal subunit protein bL19 (115 aa).

The protein belongs to the bacterial ribosomal protein bL19 family.

Its function is as follows. This protein is located at the 30S-50S ribosomal subunit interface and may play a role in the structure and function of the aminoacyl-tRNA binding site. The protein is Large ribosomal subunit protein bL19 of Tolumonas auensis (strain DSM 9187 / NBRC 110442 / TA 4).